Here is a 277-residue protein sequence, read N- to C-terminus: Diaminopimelate epimerase (277 aa).

The substrate site is built by Asn-11 and Asn-62. Cys-71 acts as the Proton donor in catalysis. Substrate-binding positions include 72-73 (GN), Asn-160, Asn-193, and 211-212 (ER). Cys-220 (proton acceptor) is an active-site residue. A substrate-binding site is contributed by 221 to 222 (GT).

It belongs to the diaminopimelate epimerase family. Homodimer.

The protein resides in the cytoplasm. The enzyme catalyses (2S,6S)-2,6-diaminopimelate = meso-2,6-diaminopimelate. The protein operates within amino-acid biosynthesis; L-lysine biosynthesis via DAP pathway; DL-2,6-diaminopimelate from LL-2,6-diaminopimelate: step 1/1. Catalyzes the stereoinversion of LL-2,6-diaminopimelate (L,L-DAP) to meso-diaminopimelate (meso-DAP), a precursor of L-lysine. This Methanococcus maripaludis (strain DSM 14266 / JCM 13030 / NBRC 101832 / S2 / LL) protein is Diaminopimelate epimerase.